Here is a 466-residue protein sequence, read N- to C-terminus: Gastric inhibitory polypeptide receptor (466 aa).

Residues 1–21 form the signal peptide; it reads MTTSPILQLLLRLSLCGLLLQ. Residues 22–138 lie on the Extracellular side of the membrane; the sequence is RAETGSKGQT…DQRLILERLQ (117 aa). Cystine bridges form between Cys-46–Cys-70, Cys-61–Cys-103, and Cys-84–Cys-118. Asn-62 and Asn-77 each carry an N-linked (GlcNAc...) asparagine glycan. A helical transmembrane segment spans residues 139-161; that stretch reads VMYTVGYSLSLATLLLALLILSL. Residues 162–169 lie on the Cytoplasmic side of the membrane; it reads FRRLHCTR. A helical transmembrane segment spans residues 170-189; it reads NYIHINLFTSFMLRAAAILS. The Extracellular portion of the chain corresponds to 190-217; that stretch reads RDRLLPRPGPYLGDQALALWNQALAACR. A helical membrane pass occupies residues 218–242; the sequence is TAQIVTQYCVGANYTWLLVEGVYLH. At 243 to 254 the chain is on the cytoplasmic side; it reads SLLVLVGGSEEG. A helical transmembrane segment spans residues 255–278; it reads HFRYYLLLGWGAPALFVIPWVIVR. Topologically, residues 279-293 are extracellular; sequence YLYENTQCWERNEVK. Residues 294–319 form a helical membrane-spanning segment; the sequence is AIWWIIRTPILMTILINFLIFIRILG. Topologically, residues 320–341 are cytoplasmic; it reads ILLSKLRTRQMRCRDYRLRLAR. A helical membrane pass occupies residues 342–362; sequence STLTLVPLLGVHEVVFAPVTE. Topologically, residues 363–377 are extracellular; the sequence is EQARGALRFAKLGFE. Residues 378–398 traverse the membrane as a helical segment; sequence IFLSSFQGFLVSVLYCFINKE. The Cytoplasmic portion of the chain corresponds to 399-466; that stretch reads VQSEIRRGWH…EASRELESYC (68 aa). Residues 427-466 are disordered; that stretch reads AFRALPSGSGPGEVPTSRGLSSGTLPGPGNEASRELESYC.

This sequence belongs to the G-protein coupled receptor 2 family. In terms of assembly, may form homodimers and heterodimers with GLP1R. In terms of processing, N-glycosylation is required for cell surface expression and lengthens receptor half-life by preventing degradation in the ER.

The protein resides in the cell membrane. This is a receptor for GIP. The activity of this receptor is mediated by G proteins which activate adenylyl cyclase. In Homo sapiens (Human), this protein is Gastric inhibitory polypeptide receptor (GIPR).